A 555-amino-acid chain; its full sequence is Connector enhancer of kinase suppressor of ras 3 (555 aa).

The 66-residue stretch at 7 to 72 (WSPKQVVDWT…LEAVDLLCAL (66 aa)) folds into the SAM domain. The region spanning 80 to 174 (NMKNLVLKLR…TAVQKDCLVA (95 aa)) is the CRIC domain. The PDZ domain occupies 211–293 (EVHLPNVRPG…GVVLLLKKRP (83 aa)). Disordered regions lie at residues 308–333 (RWKP…MDAS), 348–391 (PPPA…LDQE), and 518–538 (PFQE…ASSG). Positions 311 to 329 (PPLVQTSPPPTTTQSPEST) are enriched in low complexity. The 222-residue stretch at 325 to 546 (SPESTMDASL…SGEPSLLVSW (222 aa)) folds into the DUF1170 domain. Phosphoserine occurs at positions 381 and 383.

This sequence belongs to the CNKSR family. In terms of assembly, interacts with epithelial sodium channel ENaC. Interacts directly with SCNN1A (ENaC subunit alpha) and SCNN1B (ENaC subunit beta) C-terminal tails. Interacts with ENaC regulatory proteins NEDD4L, RAF1 and SGK1.

It is found in the cytoplasm. The protein localises to the apical cell membrane. Involved in transepithelial sodium transport. Regulates aldosterone-induced and epithelial sodium channel (ENaC)-mediated sodium transport through regulation of ENaC cell surface expression. Acts as a scaffold protein coordinating the assembly of an ENaC-regulatory complex (ERC). The chain is Connector enhancer of kinase suppressor of ras 3 (Cnksr3) from Rattus norvegicus (Rat).